We begin with the raw amino-acid sequence, 480 residues long: tRNA (guanine(37)-N(1))-methyltransferase (480 aa).

Residues 1-18 (MAAVWRRSARLFILLQRH) constitute a mitochondrion transit peptide. S-adenosyl-L-methionine-binding positions include His273, 311-312 (DL), 339-340 (DG), and Asn367. A disordered region spans residues 458-480 (HTQDRDTSEEPCPKKQKCEDSTN).

The protein belongs to the class I-like SAM-binding methyltransferase superfamily. TRM5/TYW2 family. In terms of assembly, monomer.

Its subcellular location is the mitochondrion matrix. It is found in the nucleus. It localises to the cytoplasm. It catalyses the reaction guanosine(37) in tRNA + S-adenosyl-L-methionine = N(1)-methylguanosine(37) in tRNA + S-adenosyl-L-homocysteine + H(+). Its function is as follows. Involved in mitochondrial tRNA methylation. Specifically methylates the N1 position of guanosine-37 in various tRNAs. Methylation is not dependent on the nature of the nucleoside 5' of the target nucleoside. This is the first step in the biosynthesis of wybutosine (yW), a modified base adjacent to the anticodon of tRNAs and required for accurate decoding. The polypeptide is tRNA (guanine(37)-N(1))-methyltransferase (trmt5) (Danio rerio (Zebrafish)).